The following is a 339-amino-acid chain: DNA-directed RNA polymerase subunit alpha (339 aa).

An alpha N-terminal domain (alpha-NTD) region spans residues 1–233 (MVREEITGST…DLFLPFLHTE (233 aa)). The segment at 264–339 (KKGIPLNCIF…IDLPKNKFSL (76 aa)) is alpha C-terminal domain (alpha-CTD).

It belongs to the RNA polymerase alpha chain family. In plastids the minimal PEP RNA polymerase catalytic core is composed of four subunits: alpha, beta, beta', and beta''. When a (nuclear-encoded) sigma factor is associated with the core the holoenzyme is formed, which can initiate transcription.

The protein localises to the plastid. Its subcellular location is the chloroplast. It carries out the reaction RNA(n) + a ribonucleoside 5'-triphosphate = RNA(n+1) + diphosphate. DNA-dependent RNA polymerase catalyzes the transcription of DNA into RNA using the four ribonucleoside triphosphates as substrates. This chain is DNA-directed RNA polymerase subunit alpha, found in Zea mays (Maize).